Here is a 681-residue protein sequence, read N- to C-terminus: Sodium-dependent phosphate transporter 1 (681 aa).

The next 6 membrane-spanning stretches (helical) occupy residues 25–45 (YLWMLILGFIIAFVLAFSVGA), 66–86 (ACILASIFETVGSVLLGAKVS), 106–126 (LMAGSVSAMFGSAVWQLVASF), 162–182 (IVMSWFISPLLSGIMSGILFF), 207–227 (ACTVGINLFSIMYTGAPLLGF), and 234–254 (GTILISVGCAVFCALIVWFFV). Residues serine 269 and serine 273 each carry the phosphoserine modification. A disordered region spans residues 269-296 (SPSESPLMEKKNSLKEDHEETKLSVSDI). A compositionally biased stretch (basic and acidic residues) spans 275–290 (LMEKKNSLKEDHEETK). 4 consecutive transmembrane segments (helical) span residues 515-535 (VSLLFQFLQILTACFGSFAHG), 562-582 (VATPIWLLLYGGVGICIGLWV), 604-624 (FSIELASALTVVIASNIGLPI), and 654-674 (IFMAWFVTVPISGVISAAIMA). The tract at residues 554–562 (DTGDVSSKV) is a.

The protein belongs to the inorganic phosphate transporter (PiT) (TC 2.A.20) family.

The protein resides in the cell membrane. The enzyme catalyses 2 Na(+)(out) + phosphate(out) = 2 Na(+)(in) + phosphate(in). Functionally, sodium-phosphate symporter which preferentially transports the monovalent form of phosphate with a stoichiometry of two sodium ions per phosphate ion. May play a role in extracellular matrix and cartilage calcification as well as in vascular calcification. Essential for cell proliferation but this function is independent of its phosphate transporter activity. This chain is Sodium-dependent phosphate transporter 1 (Slc20a1), found in Felis catus (Cat).